The primary structure comprises 308 residues: uncharacterized protein (308 aa).

Positions 43–55 are enriched in polar residues; the sequence is SQYGTWADQHQNG. The disordered stretch occupies residues 43-289; the sequence is SQYGTWADQH…KEERSEECSP (247 aa). S62 carries the phosphoserine modification. Residues 80–90 are compositionally biased toward polar residues; it reads HLSSYTESTSV. Residues 91 to 109 are compositionally biased toward basic and acidic residues; it reads EQRDSSRDRRSSSVDRSSS. Positions 136 to 152 are enriched in polar residues; the sequence is IHQTSVLDSSALKTRVQ. The segment covering 153 to 168 has biased composition (basic residues); that stretch reads LSKRSRRRAPISHSLR. S166 is subject to Phosphoserine. 2 stretches are compositionally biased toward basic and acidic residues: residues 175–186 and 193–216; these read SESRSPLEEESH and DSTE…ERTP. Phosphoserine occurs at positions 205, 259, 262, and 288.

This is an uncharacterized protein from Mus musculus (Mouse).